Reading from the N-terminus, the 223-residue chain is 7-cyano-7-deazaguanine synthase (223 aa).

Residue 10–20 participates in ATP binding; it reads FSGGQDSTTCL. Cys188, Cys197, Cys200, and Cys203 together coordinate Zn(2+).

It belongs to the QueC family. Zn(2+) serves as cofactor.

It carries out the reaction 7-carboxy-7-deazaguanine + NH4(+) + ATP = 7-cyano-7-deazaguanine + ADP + phosphate + H2O + H(+). It functions in the pathway purine metabolism; 7-cyano-7-deazaguanine biosynthesis. Functionally, catalyzes the ATP-dependent conversion of 7-carboxy-7-deazaguanine (CDG) to 7-cyano-7-deazaguanine (preQ(0)). The polypeptide is 7-cyano-7-deazaguanine synthase (Phocaeicola vulgatus (strain ATCC 8482 / DSM 1447 / JCM 5826 / CCUG 4940 / NBRC 14291 / NCTC 11154) (Bacteroides vulgatus)).